Consider the following 248-residue polypeptide: Triosephosphate isomerase (248 aa).

Substrate-binding residues include asparagine 10 and lysine 12. Histidine 95 (electrophile) is an active-site residue. Glutamate 165 acts as the Proton acceptor in catalysis.

This sequence belongs to the triosephosphate isomerase family. Homodimer.

It catalyses the reaction D-glyceraldehyde 3-phosphate = dihydroxyacetone phosphate. It functions in the pathway carbohydrate biosynthesis; gluconeogenesis. Its pathway is carbohydrate degradation; glycolysis; D-glyceraldehyde 3-phosphate from glycerone phosphate: step 1/1. This Kluyveromyces lactis (strain ATCC 8585 / CBS 2359 / DSM 70799 / NBRC 1267 / NRRL Y-1140 / WM37) (Yeast) protein is Triosephosphate isomerase (TPI1).